An 833-amino-acid polypeptide reads, in one-letter code: MLNKEEIIVPKNLEEEMKESYLRYSMSVIISRALPDVRDGLKPSQRRILYAMKQLNLTPGAKHRKCAKICGDTSGDYHPHGEAVIYPTLVRMAQDWAMRYPLVDGQGNFGSIDGDPAAAMRYTEARLTHSSIFLLEDLDKDTVDMVPNYDETKYEPVVFPSKFPNLLCNGSSGIAVGMATNIPPHNLGELIEATLLVLANPQTSIEEILEVMPGPDFPTGGIICGTEGIRSTYYTGRGKLRLRARIHVEENSDKQRENIILTEMPYNVNKSRLVEQIAELINEKTLTGISDVRDESDKDGIRVVLELKKGESSEVIINRLYKFTDVQVTFGANMLALDKNLPRTMSIHRMISAWIRHRMDVIRRRTRYELNKAETRAHILEGFLKALSCMDEVVKTIRESSNKEHAKQQLVELFGFSEAQSLAILELRLYQLTGLEIDKVQKEYNELLEKIAYYRRVLAEEELVKDIIREELQELHKVHKTPRRTTIEMDAGDVRDIEDIIADESVIITISGDDYVKRMPVKVFREQKRGGQGVTGFDMKKGSDFLKAVYSASTKDYLLIFTNMGQCYWLKVWQLPEGERRAKGKPIINFLEGIRPGEQVAAVLNVKRFEQGEYLLLATKKGVVKKVSLDAFGSPRKKGIRALEIDDGDELIAARHIVNDEEKVMLFTRLGMAVRFPHDKVRPMGRAARGVRGVSLKNEEDFVVSCQVVTDDQSVLVVCDNGFGKRSLVCDFRETNRGSVGVRSILINQRNGDVLGAISVTDFDSILLMSAQGQAIRINMQDVRVMGRATQGVRLVNLREGDTLVAMEKLSVNTESGETEESVSIQVGHAVEE.

The Topo IIA-type catalytic domain occupies 34 to 500; the sequence is LPDVRDGLKP…AGDVRDIEDI (467 aa). Residue Tyr122 is the O-(5'-phospho-DNA)-tyrosine intermediate of the active site. A GyrA-box motif is present at residues 527 to 533; that stretch reads QKRGGQG.

Belongs to the type II topoisomerase GyrA/ParC subunit family. In terms of assembly, heterotetramer, composed of two GyrA and two GyrB chains. In the heterotetramer, GyrA contains the active site tyrosine that forms a transient covalent intermediate with DNA, while GyrB binds cofactors and catalyzes ATP hydrolysis.

It is found in the cytoplasm. It carries out the reaction ATP-dependent breakage, passage and rejoining of double-stranded DNA.. A type II topoisomerase that negatively supercoils closed circular double-stranded (ds) DNA in an ATP-dependent manner to modulate DNA topology and maintain chromosomes in an underwound state. Negative supercoiling favors strand separation, and DNA replication, transcription, recombination and repair, all of which involve strand separation. Also able to catalyze the interconversion of other topological isomers of dsDNA rings, including catenanes and knotted rings. Type II topoisomerases break and join 2 DNA strands simultaneously in an ATP-dependent manner. The polypeptide is DNA gyrase subunit A (Chlamydia muridarum (strain MoPn / Nigg)).